The chain runs to 1704 residues: Arf-GAP with Rho-GAP domain, ANK repeat and PH domain-containing protein 2 (1704 aa).

An SAM domain is found at 6-70 (EVNVDIKDFL…LKQLQIILSK (65 aa)). At tyrosine 77 the chain carries Phosphotyrosine. The tract at residues 126-161 (NLEDSDASVERSQYPQSDDKLSPPKRDFPTAEEPHL) is disordered. A compositionally biased stretch (basic and acidic residues) spans 142–160 (SDDKLSPPKRDFPTAEEPH). PH domains follow at residues 482 to 574 (KKVK…NALK) and 587 to 679 (TPEK…QSIA). The 136-residue stretch at 676 to 811 (QSIAETLSDY…TLLASLTKEE (136 aa)) folds into the Arf-GAP domain. The C4-type zinc-finger motif lies at 700-723 (CADCKAPDPDWASINLCVVICKKC). PH domains lie at 878 to 1003 (DIHS…KHFV) and 1014 to 1114 (DYDL…AGTD). The Rho-GAP domain maps to 1116 to 1297 (NALQDQQLSK…DLINNYVEIF (182 aa)). Residues 1326-1420 (GDLLIEVYVE…AYLVVKRFLT (95 aa)) form the Ras-associating domain. A PH 5 domain is found at 1434–1537 (GSIKEGILKI…WMTSIFIAQH (104 aa)). Position 1632 is a phosphoserine (serine 1632). Residues 1636–1675 (LEDTEPEAPLGQPKGHKGLKTLRKTEDRNSKATLDSDHKL) form a disordered region. A compositionally biased stretch (basic and acidic residues) spans 1658–1675 (RKTEDRNSKATLDSDHKL).

As to expression, detected in brain, thymus, lymph node, thyroid, spinal cord, trachea, heart, skeletal muscle, spleen, kidney, liver, placenta, lung and peripheral blood leukocytes.

It localises to the cytoplasm. Functionally, phosphatidylinositol 3,4,5-trisphosphate-dependent GTPase-activating protein that modulates actin cytoskeleton remodeling by regulating ARF and RHO family members. Is activated by phosphatidylinositol 3,4,5-trisphosphate (PtdIns(3,4,5)P3) binding. Can be activated by phosphatidylinositol 3,4-bisphosphate (PtdIns(3,4,5)P2) binding, albeit with lower efficiency. The chain is Arf-GAP with Rho-GAP domain, ANK repeat and PH domain-containing protein 2 (ARAP2) from Homo sapiens (Human).